Here is a 161-residue protein sequence, read N- to C-terminus: 2-C-methyl-D-erythritol 2,4-cyclodiphosphate synthase (161 aa).

2 residues coordinate a divalent metal cation: Asp10 and His12. 4-CDP-2-C-methyl-D-erythritol 2-phosphate contacts are provided by residues 10-12 and 36-37; these read DVH and HS. His44 provides a ligand contact to a divalent metal cation. 4-CDP-2-C-methyl-D-erythritol 2-phosphate-binding positions include 58 to 60, 63 to 67, 102 to 108, 134 to 137, Phe141, and Arg144; these read DIG, FPDTD, AQAPKML, and TTTE.

Belongs to the IspF family. In terms of assembly, homotrimer. The cofactor is a divalent metal cation.

It catalyses the reaction 4-CDP-2-C-methyl-D-erythritol 2-phosphate = 2-C-methyl-D-erythritol 2,4-cyclic diphosphate + CMP. The protein operates within isoprenoid biosynthesis; isopentenyl diphosphate biosynthesis via DXP pathway; isopentenyl diphosphate from 1-deoxy-D-xylulose 5-phosphate: step 4/6. Its function is as follows. Involved in the biosynthesis of isopentenyl diphosphate (IPP) and dimethylallyl diphosphate (DMAPP), two major building blocks of isoprenoid compounds. Catalyzes the conversion of 4-diphosphocytidyl-2-C-methyl-D-erythritol 2-phosphate (CDP-ME2P) to 2-C-methyl-D-erythritol 2,4-cyclodiphosphate (ME-CPP) with a corresponding release of cytidine 5-monophosphate (CMP). The polypeptide is 2-C-methyl-D-erythritol 2,4-cyclodiphosphate synthase (Shewanella loihica (strain ATCC BAA-1088 / PV-4)).